Reading from the N-terminus, the 137-residue chain is MRTLWIMAVLLLGVEGHLLQLRKMIKKMTNKEPILSYGKYGCNCGMAGRGQPVDGTDRCCSIHNCCYGKVNGCSPKWDYYTYSEENGDIVCEEKHPCKDVCECDKAVATCFRDNLDTYKKRNIFHPKSSCVKVSTPC.

The N-terminal stretch at 1-16 (MRTLWIMAVLLLGVEG) is a signal peptide. 7 cysteine pairs are disulfide-bonded: C42–C130, C44–C60, C59–C110, C65–C137, C66–C103, C73–C97, and C91–C101.

As to expression, expressed by the venom gland.

It localises to the secreted. Its function is as follows. Snake venom phospholipase A2 homolog that induces local edema a few hours after injection (5-10 ug) in the hind paw and shows weak anticoagulant and myotoxic activities. This is Basic phospholipase A2 homolog Ts-R6 from Trimeresurus stejnegeri (Chinese green tree viper).